The primary structure comprises 275 residues: NH(3)-dependent NAD(+) synthetase (275 aa).

46-53 serves as a coordination point for ATP; sequence GISGGQDS. A Mg(2+)-binding site is contributed by Asp52. Arg140 lines the deamido-NAD(+) pocket. Residue Thr160 coordinates ATP. Glu165 is a Mg(2+) binding site. The deamido-NAD(+) site is built by Lys173 and Asp180. Lys189 and Thr211 together coordinate ATP. Deamido-NAD(+) is bound at residue 260–261; sequence HK.

Belongs to the NAD synthetase family. In terms of assembly, homodimer.

It catalyses the reaction deamido-NAD(+) + NH4(+) + ATP = AMP + diphosphate + NAD(+) + H(+). It functions in the pathway cofactor biosynthesis; NAD(+) biosynthesis; NAD(+) from deamido-NAD(+) (ammonia route): step 1/1. Catalyzes the ATP-dependent amidation of deamido-NAD to form NAD. Uses ammonia as a nitrogen source. The polypeptide is NH(3)-dependent NAD(+) synthetase (Enterobacter sp. (strain 638)).